The sequence spans 117 residues: Ig heavy chain V region MOPC 47A (117 aa).

Residues 1 to 113 (EVKLVESGGG…FAYWGZGTLV (113 aa)) form the Ig-like domain.

This Mus musculus (Mouse) protein is Ig heavy chain V region MOPC 47A.